A 102-amino-acid chain; its full sequence is Small ribosomal subunit protein uS10 (102 aa).

It belongs to the universal ribosomal protein uS10 family. As to quaternary structure, part of the 30S ribosomal subunit.

Functionally, involved in the binding of tRNA to the ribosomes. This Mycoplasma mycoides subsp. mycoides SC (strain CCUG 32753 / NCTC 10114 / PG1) protein is Small ribosomal subunit protein uS10.